Here is a 263-residue protein sequence, read N- to C-terminus: Copper homeostasis protein cutC homolog (263 aa).

It belongs to the CutC family.

Functionally, involved in copper homeostasis. This chain is Copper homeostasis protein cutC homolog, found in Drosophila melanogaster (Fruit fly).